A 356-amino-acid polypeptide reads, in one-letter code: MPLVAHSNLPTFERLRKEGGTVLPNDYALHQDIRALHIGLLNMMPDAALAATERQFFRLVGESNQIAQFYMHPFTLAELPRGPGGQAHVERYYETFDTIQREGLDALIITGANVSQPDLALEPFWEPLAEVVEWAWKNVTSTLCSCLTTHAVMQSRYGERRRHRGAKLWGVFDHRVVDRTHPLVAGVNTRFDVPHSRFNDVSREQFDRHRLKVLVESERAGVHLAVSEDGFRLVFFQGHPEYDSISLLKEYKREVLRFVNGEREEFPPLPERYLSPQAAAILEEHRERVEQARQRRVPAPELPEPLLVGRLDNTWHDSALAVVNNWIGNVYQFTNHDRRIPFRPGVDPNAPLNWSR.

Cys146 functions as the Acyl-thioester intermediate in the catalytic mechanism. Substrate contacts are provided by Lys167 and Ser196. Catalysis depends on His239, which acts as the Proton acceptor. Glu241 is an active-site residue. A substrate-binding site is contributed by Arg253.

It belongs to the MetA family.

It is found in the cytoplasm. The enzyme catalyses L-homoserine + succinyl-CoA = O-succinyl-L-homoserine + CoA. It participates in amino-acid biosynthesis; L-methionine biosynthesis via de novo pathway; O-succinyl-L-homoserine from L-homoserine: step 1/1. Functionally, transfers a succinyl group from succinyl-CoA to L-homoserine, forming succinyl-L-homoserine. This Thioalkalivibrio nitratireducens (strain DSM 14787 / UNIQEM 213 / ALEN2) protein is Homoserine O-succinyltransferase.